Reading from the N-terminus, the 339-residue chain is ATP-dependent 6-phosphofructokinase (339 aa).

Residues glycine 11, 72-73, and 102-105 each bind ATP; these read RY and GDGS. A Mg(2+)-binding site is contributed by aspartate 103. Residues 125–127, arginine 162, and 169–171 each bind substrate; these read TID and MGR. The Proton acceptor role is filled by aspartate 127. Residues 185–187 and 214–216 contribute to the ADP site; these read GAD and KSH. Substrate is bound by residues glutamate 223, arginine 245, and 251–254; that span reads HVIR.

Belongs to the phosphofructokinase type A (PFKA) family. ATP-dependent PFK group I subfamily. Prokaryotic clade 'B1' sub-subfamily. As to quaternary structure, homotetramer. The cofactor is Mg(2+).

The protein localises to the cytoplasm. It catalyses the reaction beta-D-fructose 6-phosphate + ATP = beta-D-fructose 1,6-bisphosphate + ADP + H(+). The protein operates within carbohydrate degradation; glycolysis; D-glyceraldehyde 3-phosphate and glycerone phosphate from D-glucose: step 3/4. With respect to regulation, allosterically activated by ADP and other diphosphonucleosides, and allosterically inhibited by phosphoenolpyruvate. In terms of biological role, catalyzes the phosphorylation of D-fructose 6-phosphate to fructose 1,6-bisphosphate by ATP, the first committing step of glycolysis. The protein is ATP-dependent 6-phosphofructokinase of Streptococcus thermophilus (strain ATCC BAA-491 / LMD-9).